A 204-amino-acid chain; its full sequence is Copper-binding protein CutI (204 aa).

A signal peptide spans 1-26 (MLKKIALTLCPAIVGSLLFFTAPASA). Cu(2+) is bound by residues histidine 27 and glutamate 50. The Extracellular segment spans residues 27 to 178 (HVSVKPAESA…DDSENSGSSA (152 aa)). Residues 146-176 (PHSITNITSAKQVTDEHGATKTEDDSENSGS) form a disordered region. The span at 147–157 (HSITNITSAKQ) shows a compositional bias: polar residues. Positions 158-168 (VTDEHGATKTE) are enriched in basic and acidic residues. Residues 179 to 199 (LDITAMVLSAAAIILSVAALV) traverse the membrane as a helical segment. Topologically, residues 200 to 204 (KKKRA) are cytoplasmic.

The protein resides in the cell membrane. Functionally, copper-binding protein that probably plays a role in copper homeostasis. May act as metallochaperone, possibly to facilitate copper uptake via the CutJ/YcnJ importer. Preferentially binds Cu in its oxidized Cu(II) state in a 1:1 stoichiometry. The chain is Copper-binding protein CutI from Bacillus subtilis (strain 168).